We begin with the raw amino-acid sequence, 364 residues long: Long-wave-sensitive opsin 1 (364 aa).

Residues 1–52 (MTQRWGPQRLAGGQPHAGLEDSTRASIFTYTNSNATRGPFEGPNYHIAPRWV) lie on the Extracellular side of the membrane. Ser-22 is a glycosylation site (O-linked (GlcNAc) serine). Asn-34 carries an N-linked (GlcNAc...) asparagine glycan. Residues 53 to 77 (YHVTSAWMIFVVIASVFTNGLVLAA) traverse the membrane as a helical segment. Residues 78 to 89 (TMKFKKLRHPLN) lie on the Cytoplasmic side of the membrane. Residues 90-115 (WILVNLAVADLAETIIASTISVVNQI) form a helical membrane-spanning segment. The Extracellular portion of the chain corresponds to 116-129 (YGYFVLGHPMCVLE). An intrachain disulfide couples Cys-126 to Cys-203. Residues 130–149 (GYTVSLCGITGLWSLAIISW) form a helical membrane-spanning segment. Over 150-168 (ERWLVVCKPFGNVRFDAKL) the chain is Cytoplasmic. A helical membrane pass occupies residues 169–192 (AIAGIAFSWIWAAVWTAPPIFGWS). At 193 to 218 (RYWPHGLKTSCGPDVFSGSSYPGVQS) the chain is on the extracellular side. Residues 219-246 (YMIVLMITCCIIPLSVIVLCYLQVWLAI) traverse the membrane as a helical segment. Topologically, residues 247-268 (RAVAKQQKESESTQKAEKEVTR) are cytoplasmic. A helical membrane pass occupies residues 269 to 292 (MVMVMIFAYCVCWGPYTFFACFAA). The Extracellular portion of the chain corresponds to 293 to 300 (AHPGYAFH). A helical transmembrane segment spans residues 301–325 (PLVAALPAYFAKSATIYNPIIYVFM). An N6-(retinylidene)lysine modification is found at Lys-312. The Cytoplasmic portion of the chain corresponds to 326–364 (NRQFRNCIMQLFGKKVDDGSELSSASRTEASSVSSVSPA).

This sequence belongs to the G-protein coupled receptor 1 family. Opsin subfamily. Post-translationally, phosphorylated on some or all of the serine and threonine residues present in the C-terminal region. In terms of tissue distribution, the three color pigments are found in the cone photoreceptor cells. Expressed in retina.

It localises to the membrane. In terms of biological role, visual pigments are the light-absorbing molecules that mediate vision. They consist of an apoprotein, opsin, covalently linked to cis-retinal. The sequence is that of Long-wave-sensitive opsin 1 (OPN1LW) from Felis catus (Cat).